The chain runs to 1263 residues: Multidrug resistance protein sirA (1263 aa).

The tract at residues 1–21 (MAEPESEKPSSAQGGGLPSSD) is disordered. 4 consecutive transmembrane segments (helical) span residues 57–77 (LISA…ILFI), 104–124 (IALY…IFTN), 179–199 (KIGL…IGFV), and 206–226 (FILT…SGFM). In terms of domain architecture, ABC transmembrane type-1 1 spans 57 to 347 (LISAFFAAVS…VGPHLQAMSL (291 aa)). N-linked (GlcNAc...) asparagine glycosylation is present at N232. Transmembrane regions (helical) follow at residues 284-304 (VMGW…GLAI) and 318-338 (VGAI…FGNV). The ABC transporter 1 domain occupies 380 to 625 (IEFRNVSHVY…EGLYQTFVRR (246 aa)). N-linked (GlcNAc...) asparagine glycosylation occurs at N384. Position 415 to 422 (415 to 422 (GASGSGKS)) interacts with ATP. N-linked (GlcNAc...) asparagine glycosylation is present at N469. Residues 635-672 (PPHARITPAVDTPASPQHRLSEKTGSIYGQGESEAADK) are disordered. 6 helical membrane-spanning segments follow: residues 699 to 719 (VTGI…SVFF), 740 to 760 (FWAA…GVQG), 817 to 839 (VFLG…SLAV), 843 to 865 (LTLV…LKLV), 930 to 950 (LSEA…ATLV), and 960 to 980 (FFIV…VFAF). The 288-residue stretch at 699 to 986 (VTGIASAVIS…VFAFAPDFGK (288 aa)) folds into the ABC transmembrane type-1 2 domain. The region spanning 1021–1259 (VDVSNVVFYY…RGSYYDSVNL (239 aa)) is the ABC transporter 2 domain. 1056-1063 (GGSGSGKS) is an ATP binding site.

The protein belongs to the ABC transporter superfamily. ABCB family. Multidrug resistance exporter (TC 3.A.1.201) subfamily.

It is found in the cell membrane. The enzyme catalyses ATP + H2O + xenobioticSide 1 = ADP + phosphate + xenobioticSide 2.. Sirodesmin transporter that provides the dual role of sirodesmin export and self-protection. Also provides tolerance to gliotoxin. This is Multidrug resistance protein sirA from Leptosphaeria maculans (Blackleg fungus).